A 727-amino-acid polypeptide reads, in one-letter code: Beta-galactosidase 2 (727 aa).

The first 27 residues, 1 to 27, serve as a signal peptide directing secretion; that stretch reads MSMHFRNKAWIILAILCFSSLIHSTEA. The Proton donor role is filled by E185. E254 acts as the Nucleophile in catalysis. N-linked (GlcNAc...) asparagine glycosylation is present at N255.

Belongs to the glycosyl hydrolase 35 family. In terms of tissue distribution, ubiquitous, with higher expression levels in roots and siliques.

It localises to the secreted. It is found in the extracellular space. The protein localises to the apoplast. The catalysed reaction is Hydrolysis of terminal non-reducing beta-D-galactose residues in beta-D-galactosides.. The protein is Beta-galactosidase 2 (BGAL2) of Arabidopsis thaliana (Mouse-ear cress).